The chain runs to 583 residues: MRRHPQTATKHLFVSGGVASSLGKGLTASSLGQLLTARGLRVTMQKLDPYLNVDPGTMNPFQHGEVFVTEDGAETDLDVGHYERFLDRDLSGSANVTTGQVYSTVIAKERRGEYLGDTVQVIPHITDEIKRRIMAMAEPNADGRRPDVVITEIGGTVGDIESQPFLEAARQVRHDLGRENVFFLHVSLVPYLAPSGELKTKPTQHSVAALRSIGITPDALILRCDRDVPEALKNKIALMCDVDIDGIISTPDAPSIYDIPKVLHREELDAFVVRRLNLPFRDVDWTEWDDLLRRVHEPKETVRIALVGKYVELSDAYLSVIEAIRAGGFKHRAKVEISWVGSDDCQTDGGVASALGDVHGVLIPGGFGIRGIEGKISAISYARSRGLPVFGLCLGLQCIVIEAARSVGLTEANSAEFEPGTPDPVISTMADQEHIVSGQADLGGTMRLGAYPAVLESGSIVAEAYQSTKVSERHRHRYEVNNAYRDRIAESGLRFSGTSPDGHLVEFVEYPPEQHPFVVGTQAHPELKSRPTRPHPLFAAFVKAAIDYKEGELLPVEMPERVSNGAERRDQVGQSIPEPANRG.

An amidoligase domain region spans residues 1–278 (MRRHPQTATK…DAFVVRRLNL (278 aa)). Residue S20 coordinates CTP. S20 is a UTP binding site. ATP-binding positions include 21 to 26 (SLGKGL) and D78. D78 and E152 together coordinate Mg(2+). CTP contacts are provided by residues 159 to 161 (DIE), 199 to 204 (KTKPTQ), and K235. UTP is bound by residues 199 to 204 (KTKPTQ) and K235. The 249-residue stretch at 303-551 (RIALVGKYVE…VKAAIDYKEG (249 aa)) folds into the Glutamine amidotransferase type-1 domain. G366 is an L-glutamine binding site. The Nucleophile; for glutamine hydrolysis role is filled by C393. Residues 394–397 (LGLQ), E416, and R477 contribute to the L-glutamine site. Active-site residues include H524 and E526. Residues 559–583 (PERVSNGAERRDQVGQSIPEPANRG) are disordered.

The protein belongs to the CTP synthase family. Homotetramer.

It catalyses the reaction UTP + L-glutamine + ATP + H2O = CTP + L-glutamate + ADP + phosphate + 2 H(+). The enzyme catalyses L-glutamine + H2O = L-glutamate + NH4(+). It carries out the reaction UTP + NH4(+) + ATP = CTP + ADP + phosphate + 2 H(+). It functions in the pathway pyrimidine metabolism; CTP biosynthesis via de novo pathway; CTP from UDP: step 2/2. With respect to regulation, allosterically activated by GTP, when glutamine is the substrate; GTP has no effect on the reaction when ammonia is the substrate. The allosteric effector GTP functions by stabilizing the protein conformation that binds the tetrahedral intermediate(s) formed during glutamine hydrolysis. Inhibited by the product CTP, via allosteric rather than competitive inhibition. Catalyzes the ATP-dependent amination of UTP to CTP with either L-glutamine or ammonia as the source of nitrogen. Regulates intracellular CTP levels through interactions with the four ribonucleotide triphosphates. This Mycobacterium marinum (strain ATCC BAA-535 / M) protein is CTP synthase.